The chain runs to 113 residues: Photosystem II reaction center Psb28 protein (113 aa).

The protein belongs to the Psb28 family. Part of the photosystem II complex.

It is found in the cellular thylakoid membrane. The polypeptide is Photosystem II reaction center Psb28 protein (Prochlorococcus marinus (strain NATL1A)).